Consider the following 394-residue polypeptide: MYVTHLSLRDFRNYERLDLNLEPGVTLLYGPNAAGKTTVLEAIYFLATTRSPRAGADRELVRFEAQGDLGVPPFARLVCDVVRADGYVRLEVVVQRRAEEESAIGATPTIKTVRIDRKAVRALDLVGNLRVVLFTPADIALVTGAPAERRRYLDVTLSQIDGRYVRTLAHYQKVVQQRNSLLRAWREGRRPLRYADDELAFWDRELAMAGAYLLRERLHAVVDLNALAGPLYCRMSGGDTPLTLAYQSSVAGIDSVTDSRAIEQAFLAHLTRLRDDEIGRGQTLIGPHRDDLLIAVGGVPIGAYGSRGQQRSATLSLKLGEAKLMRIRTGDAPVLLLDDLLSELDAERRSHVQDILERPDQQTIVTATGTDDFDLKFLTRARRWRVESGHLYPA.

Glycine 30–threonine 37 contributes to the ATP binding site.

The protein belongs to the RecF family.

The protein resides in the cytoplasm. Functionally, the RecF protein is involved in DNA metabolism; it is required for DNA replication and normal SOS inducibility. RecF binds preferentially to single-stranded, linear DNA. It also seems to bind ATP. The sequence is that of DNA replication and repair protein RecF from Roseiflexus castenholzii (strain DSM 13941 / HLO8).